The chain runs to 246 residues: Small ribosomal subunit protein uS3 (246 aa).

The 69-residue stretch at 38-106 folds into the KH type-2 domain; sequence IRQYLNARLA…DVQINIYEIR (69 aa). Residues 218–246 form a disordered region; it reads VAKNQSRRPNAQGGNNRGGDRNRRRKGNR.

This sequence belongs to the universal ribosomal protein uS3 family. In terms of assembly, part of the 30S ribosomal subunit. Forms a tight complex with proteins S10 and S14.

Binds the lower part of the 30S subunit head. Binds mRNA in the 70S ribosome, positioning it for translation. The chain is Small ribosomal subunit protein uS3 from Porphyromonas gingivalis (strain ATCC 33277 / DSM 20709 / CIP 103683 / JCM 12257 / NCTC 11834 / 2561).